Reading from the N-terminus, the 255-residue chain is Imidazole glycerol phosphate synthase subunit HisF (255 aa).

Catalysis depends on residues aspartate 11 and aspartate 130.

It belongs to the HisA/HisF family. As to quaternary structure, heterodimer of HisH and HisF.

Its subcellular location is the cytoplasm. The catalysed reaction is 5-[(5-phospho-1-deoxy-D-ribulos-1-ylimino)methylamino]-1-(5-phospho-beta-D-ribosyl)imidazole-4-carboxamide + L-glutamine = D-erythro-1-(imidazol-4-yl)glycerol 3-phosphate + 5-amino-1-(5-phospho-beta-D-ribosyl)imidazole-4-carboxamide + L-glutamate + H(+). The protein operates within amino-acid biosynthesis; L-histidine biosynthesis; L-histidine from 5-phospho-alpha-D-ribose 1-diphosphate: step 5/9. Functionally, IGPS catalyzes the conversion of PRFAR and glutamine to IGP, AICAR and glutamate. The HisF subunit catalyzes the cyclization activity that produces IGP and AICAR from PRFAR using the ammonia provided by the HisH subunit. This chain is Imidazole glycerol phosphate synthase subunit HisF, found in Campylobacter lari (strain RM2100 / D67 / ATCC BAA-1060).